Reading from the N-terminus, the 588-residue chain is Sulfite reductase [NADPH] hemoprotein beta-component (588 aa).

4 residues coordinate [4Fe-4S] cluster: Cys-443, Cys-449, Cys-488, and Cys-492. Cys-492 serves as a coordination point for siroheme.

Belongs to the nitrite and sulfite reductase 4Fe-4S domain family. Alpha(8)-beta(8). The alpha component is a flavoprotein, the beta component is a hemoprotein. Siroheme is required as a cofactor. It depends on [4Fe-4S] cluster as a cofactor.

It catalyses the reaction hydrogen sulfide + 3 NADP(+) + 3 H2O = sulfite + 3 NADPH + 4 H(+). It participates in sulfur metabolism; hydrogen sulfide biosynthesis; hydrogen sulfide from sulfite (NADPH route): step 1/1. In terms of biological role, component of the sulfite reductase complex that catalyzes the 6-electron reduction of sulfite to sulfide. This is one of several activities required for the biosynthesis of L-cysteine from sulfate. In Actinobacillus succinogenes (strain ATCC 55618 / DSM 22257 / CCUG 43843 / 130Z), this protein is Sulfite reductase [NADPH] hemoprotein beta-component.